Consider the following 209-residue polypeptide: Eukaryotic translation initiation factor 4E (209 aa).

This sequence belongs to the eukaryotic initiation factor 4E family. In terms of assembly, eIF4F is a multi-subunit complex, the composition of which varies with external and internal environmental conditions. It is composed of at least eIF4A, eIF4E and eIF4G. eIF4E is also known to interact with other partners.

Functionally, recognizes and binds the 7-methylguanosine-containing mRNA cap during an early step in the initiation of protein synthesis and facilitates ribosome binding by inducing the unwinding of the mRNAs secondary structures. The chain is Eukaryotic translation initiation factor 4E (TIF45) from Candida glabrata (strain ATCC 2001 / BCRC 20586 / JCM 3761 / NBRC 0622 / NRRL Y-65 / CBS 138) (Yeast).